Here is a 152-residue protein sequence, read N- to C-terminus: UPF0266 membrane protein YobD (152 aa).

3 helical membrane-spanning segments follow: residues 6-26, 45-65, and 67-87; these read LVLILFIAVLLAFAIYDQFIM, IDSVIFVGLIVILIYNSVTNH, and ALITTWLLSALALMGFYIFWI.

It belongs to the UPF0266 family.

It localises to the cell inner membrane. This chain is UPF0266 membrane protein YobD, found in Escherichia coli O127:H6 (strain E2348/69 / EPEC).